The chain runs to 610 residues: UvrABC system protein C (610 aa).

One can recognise a GIY-YIG domain in the interval 16-94 (SQPGVYRMYD…IKLYQPRYNV (79 aa)). In terms of domain architecture, UVR spans 204 to 239 (DQVLTQLIARMEKASQDLAFEEAARIRDQIQAVRRV).

It belongs to the UvrC family. Interacts with UvrB in an incision complex.

The protein localises to the cytoplasm. The UvrABC repair system catalyzes the recognition and processing of DNA lesions. UvrC both incises the 5' and 3' sides of the lesion. The N-terminal half is responsible for the 3' incision and the C-terminal half is responsible for the 5' incision. The sequence is that of UvrABC system protein C from Salmonella heidelberg (strain SL476).